The chain runs to 168 residues: Cilia- and flagella-associated protein HOATZ (168 aa).

The segment at proline 142–glutamate 168 is disordered.

It belongs to the HOATZ family. Specifically expressed in tissues with motile cilia and flagella, such as brain ependyma, lung, testis, and oviduct but not in whole brain, liver,kidney, spleen, and eyeball.

It is found in the cytoplasm. It localises to the cell projection. The protein localises to the cilium. Required for motile ciliogenesis and flagellar genesis by mediating the maturation of the glycolytic enzyme ENO4. This Mus musculus (Mouse) protein is Cilia- and flagella-associated protein HOATZ.